Reading from the N-terminus, the 333-residue chain is HTH-type transcriptional repressor PurR (333 aa).

Residues 2–56 enclose the HTH lacI-type domain; that stretch reads ATIKDVAKMAGVSTTTVSHVINKTRFVAKETEQQVLQAIKNLNYSPSAVARSLKV. A DNA-binding region (H-T-H motif) is located at residues 4-23; sequence IKDVAKMAGVSTTTVSHVIN. Residues 48 to 56 mediate DNA binding; that stretch reads SAVARSLKV. Residues Tyr-73, Lys-189, Thr-191, Phe-220, and Asp-274 each coordinate hypoxanthine.

In terms of assembly, homodimer.

It participates in purine metabolism; purine nucleotide biosynthesis [regulation]. In terms of biological role, is the main repressor of the genes involved in the de novo synthesis of purine nucleotides, regulating purB, purC, purEK, purF, purHD, purL, purMN and guaBA expression. PurR is allosterically activated to bind its cognate DNA by binding the purine corepressors, hypoxanthine or guanine, thereby effecting transcription repression. This chain is HTH-type transcriptional repressor PurR, found in Histophilus somni (strain 129Pt) (Haemophilus somnus).